The sequence spans 1044 residues: MGSNDLNTWVSDKLMVLLGFSQTAVVQYLIAMAKQSKSPGELVRELVECGFSLSGDTRAFAEEIYARAPRKTPGVNLYQQQEAEAAMLLKKQKTFSLLEADHDEDENNVKKQSASKTGKSDKGQKRFRKKSEQLEDDDDEVVIVREDKRNVRRKVSEDEDDGTESEEERLRDQREREELEQHLRERDTARTRKLTEPKMSKKEQEEFVRRDSAVDKGDIESLRKFSWQEYMKKRKQKKVLELKDDIEDEPYLFGDEKLTEREIREFRYKREIYELIKKSTQEEDNVGEYRMPDAYDQQGSVDQEKRFAVSVQRYRDMGSAEKMNPFAEQEAWEDHQIENAALKFGAKNKEVSDNYEFVFEDQIDFIKASVLAGDNYEDEMHAKPSQDSAGKSAFHMLQEDRKALPIYTYRDQLLNAVKDHQVLIIVGETGSGKTTQIPQYLHEAGYTKLGKVGCTQPRRVAAMSVAARVAQEMGGKLGHEVGYSIRFEDCTSEKTILKYMTDGMLLRELLGEPDLGSYSVIIVDEAHERTLRTDILFGLVKDIARARPDLKLLISSATMDAEKFSDFFDQAPIFRFPGRRYPVDICFTTAPEADYMDAAITTVLTIHVKEPLGDVLVFLPGQEEIEAVEENLKHKIRGLGTKIRELIICPIYANLPSELQAKIFEPTPEGARKVVLATNIAETSLTIDGIKYVVDPGFSKMKSYNPRTGMESLLVTPISKASATQRTGRAGRTSPGKCYRLYTAFNYYNDLEDNTVPEIQRTNLASVVLSLKSLGIHNLLNFDFMDPPPSEALIKSLELLFALGALNQLGELTKAGRRMAEFPLDPMLSKMIVVSDKYKCSDEIISIAAMLSIGPSIFYRPKDKQVHADNAMKNFHVGNVGDHIAFLKIYNSWKETNYSTQWCYENYIQVRSMKRARDIRDQLEGLLERVEIDVSSNANELDSIRKSIVAGFFPHTAKLQKNGSYRTVKHPQTVHIHPASGLSQVLPRWVVYHQLVLTSKEYMRQVTELKPEWLIEIAPHYYQLKDVEDATSKKMPKTSGRAVV.

2 disordered regions span residues 99 to 134 and 152 to 211; these read EADH…SEQL and RRKV…VRRD. Residues 157-167 show a composition bias toward acidic residues; it reads EDEDDGTESEE. Over residues 168–211 the composition is skewed to basic and acidic residues; that stretch reads ERLRDQREREELEQHLRERDTARTRKLTEPKMSKKEQEEFVRRD. A Helicase ATP-binding domain is found at 414–577; it reads LNAVKDHQVL…FDQAPIFRFP (164 aa). Position 427–434 (427–434) interacts with ATP; it reads GETGSGKT. The DEAH box motif lies at 524 to 527; it reads DEAH. In terms of domain architecture, Helicase C-terminal spans 599 to 775; the sequence is AITTVLTIHV…SVVLSLKSLG (177 aa).

This sequence belongs to the DEAD box helicase family. DEAH subfamily. PRP2 sub-subfamily. As to expression, predominantly expressed in flowers.

It carries out the reaction ATP + H2O = ADP + phosphate + H(+). May be involved in pre-mRNA splicing. The sequence is that of Probable pre-mRNA-splicing factor ATP-dependent RNA helicase DEAH6 from Arabidopsis thaliana (Mouse-ear cress).